Consider the following 955-residue polypeptide: Glycine dehydrogenase (decarboxylating) (955 aa).

K705 bears the N6-(pyridoxal phosphate)lysine mark.

The protein belongs to the GcvP family. In terms of assembly, the glycine cleavage system is composed of four proteins: P, T, L and H. It depends on pyridoxal 5'-phosphate as a cofactor.

The catalysed reaction is N(6)-[(R)-lipoyl]-L-lysyl-[glycine-cleavage complex H protein] + glycine + H(+) = N(6)-[(R)-S(8)-aminomethyldihydrolipoyl]-L-lysyl-[glycine-cleavage complex H protein] + CO2. Its function is as follows. The glycine cleavage system catalyzes the degradation of glycine. The P protein binds the alpha-amino group of glycine through its pyridoxal phosphate cofactor; CO(2) is released and the remaining methylamine moiety is then transferred to the lipoamide cofactor of the H protein. This is Glycine dehydrogenase (decarboxylating) from Aliivibrio fischeri (strain ATCC 700601 / ES114) (Vibrio fischeri).